We begin with the raw amino-acid sequence, 228 residues long: MAAPSEAPVTRQVSGHAAPAPVPSGPASWQPLAAAVAELPVLDASGRPVLFGELFRERRAIVVFVRHFLCYICKEYVEDLAKIPKSFLQEANVTLIVIGQSSYHHIEPFCKLTGYSHEIYVDPEREIYKRLGMKRGEEIASSGQSPHVKSNILSGSIRSLWRAVTGPLFDFQGDPAQQGGTLILGPGNNIHFIHHDRNRLDHKPINSVLQLVGVQHVDFTSRPSVIHV.

The interval 1-22 is disordered; the sequence is MAAPSEAPVTRQVSGHAAPAPV. Low complexity predominate over residues 13–22; it reads VSGHAAPAPV.

Belongs to the peroxiredoxin-like PRXL2 family. PRXL2C subfamily.

Functionally, may positively regulate ERK1/2 signaling and AKT1 activation leading to HIF1A up-regulation with an increased expression of glycolysis genes and enhanced glycolysis. In Bos taurus (Bovine), this protein is Peroxiredoxin-like 2C (PRXL2C).